Here is a 194-residue protein sequence, read N- to C-terminus: Holliday junction branch migration complex subunit RuvA (194 aa).

A domain I region spans residues 1–64 (MIGRLRGILA…EDSVALYGFL (64 aa)). The interval 65–140 (REGERRLFRD…RAADFSSGAP (76 aa)) is domain II. The segment at 140–144 (PITGQ) is flexible linker. The domain III stretch occupies residues 145–194 (LGPDAVSEATVALQQLGYKPAEAARMARDAGAEGDEVATVIRKALQAALR).

It belongs to the RuvA family. Homotetramer. Forms an RuvA(8)-RuvB(12)-Holliday junction (HJ) complex. HJ DNA is sandwiched between 2 RuvA tetramers; dsDNA enters through RuvA and exits via RuvB. An RuvB hexamer assembles on each DNA strand where it exits the tetramer. Each RuvB hexamer is contacted by two RuvA subunits (via domain III) on 2 adjacent RuvB subunits; this complex drives branch migration. In the full resolvosome a probable DNA-RuvA(4)-RuvB(12)-RuvC(2) complex forms which resolves the HJ.

It is found in the cytoplasm. In terms of biological role, the RuvA-RuvB-RuvC complex processes Holliday junction (HJ) DNA during genetic recombination and DNA repair, while the RuvA-RuvB complex plays an important role in the rescue of blocked DNA replication forks via replication fork reversal (RFR). RuvA specifically binds to HJ cruciform DNA, conferring on it an open structure. The RuvB hexamer acts as an ATP-dependent pump, pulling dsDNA into and through the RuvAB complex. HJ branch migration allows RuvC to scan DNA until it finds its consensus sequence, where it cleaves and resolves the cruciform DNA. This Xanthomonas euvesicatoria pv. vesicatoria (strain 85-10) (Xanthomonas campestris pv. vesicatoria) protein is Holliday junction branch migration complex subunit RuvA.